Consider the following 199-residue polypeptide: Holliday junction branch migration complex subunit RuvA (199 aa).

Residues 1–64 form a domain I region; it reads MIALLTGRLA…EDSISLFGFR (64 aa). The segment at 65-143 is domain II; the sequence is TLAEKEFFQL…KMDVAPSAQE (79 aa). Positions 144-154 are flexible linker; the sequence is APSSEAPAEVA. Residues 154-199 form a domain III region; that stretch reads ADDVASALVNLGYKEAVVRKVLAEMSIEPDASTEAVLRQALKVLMK.

Belongs to the RuvA family. As to quaternary structure, homotetramer. Forms an RuvA(8)-RuvB(12)-Holliday junction (HJ) complex. HJ DNA is sandwiched between 2 RuvA tetramers; dsDNA enters through RuvA and exits via RuvB. An RuvB hexamer assembles on each DNA strand where it exits the tetramer. Each RuvB hexamer is contacted by two RuvA subunits (via domain III) on 2 adjacent RuvB subunits; this complex drives branch migration. In the full resolvosome a probable DNA-RuvA(4)-RuvB(12)-RuvC(2) complex forms which resolves the HJ.

The protein localises to the cytoplasm. Its function is as follows. The RuvA-RuvB-RuvC complex processes Holliday junction (HJ) DNA during genetic recombination and DNA repair, while the RuvA-RuvB complex plays an important role in the rescue of blocked DNA replication forks via replication fork reversal (RFR). RuvA specifically binds to HJ cruciform DNA, conferring on it an open structure. The RuvB hexamer acts as an ATP-dependent pump, pulling dsDNA into and through the RuvAB complex. HJ branch migration allows RuvC to scan DNA until it finds its consensus sequence, where it cleaves and resolves the cruciform DNA. This Geobacter sulfurreducens (strain ATCC 51573 / DSM 12127 / PCA) protein is Holliday junction branch migration complex subunit RuvA.